We begin with the raw amino-acid sequence, 618 residues long: UvrABC system protein C (618 aa).

A GIY-YIG domain is found at 13-92 (DKPGVYLMKN…IKKYRPKYNI (80 aa)). The region spanning 204–239 (LDIVENFKLNMEKAAENLEFEKAAMLRDKINIIEKI) is the UVR domain.

Belongs to the UvrC family. Interacts with UvrB in an incision complex.

The protein resides in the cytoplasm. The UvrABC repair system catalyzes the recognition and processing of DNA lesions. UvrC both incises the 5' and 3' sides of the lesion. The N-terminal half is responsible for the 3' incision and the C-terminal half is responsible for the 5' incision. The polypeptide is UvrABC system protein C (Clostridium botulinum (strain Kyoto / Type A2)).